A 527-amino-acid polypeptide reads, in one-letter code: T-complex protein 1 subunit beta (527 aa).

Ser2 is modified (N-acetylserine).

This sequence belongs to the TCP-1 chaperonin family. Heterooligomeric complex of about 850 to 900 kDa that forms two stacked rings, 12 to 16 nm in diameter. Interacts with PLP2; this interaction leads to inhibition of CCT complex mediated actin folding.

Its subcellular location is the cytoplasm. Functionally, molecular chaperone; assists the folding of proteins upon ATP hydrolysis. Known to play a role, in vitro, in the folding of actin and tubulin. In yeast may play a role in mitotic spindle formation. This is T-complex protein 1 subunit beta (CCT2) from Saccharomyces cerevisiae (strain ATCC 204508 / S288c) (Baker's yeast).